The chain runs to 496 residues: Glycerol kinase (496 aa).

T12 lines the ADP pocket. Residues T12, T13, and S14 each contribute to the ATP site. T12 serves as a coordination point for sn-glycerol 3-phosphate. R16 provides a ligand contact to ADP. Residues R82, E83, and Y134 each coordinate sn-glycerol 3-phosphate. Glycerol-binding residues include R82, E83, and Y134. The residue at position 230 (H230) is a Phosphohistidine; by HPr. D244 contacts sn-glycerol 3-phosphate. Glycerol contacts are provided by D244 and Q245. The ADP site is built by T266 and G309. 4 residues coordinate ATP: T266, G309, Q313, and G410. Residues G410 and N414 each contribute to the ADP site.

Belongs to the FGGY kinase family. Homotetramer and homodimer (in equilibrium). The phosphoenolpyruvate-dependent sugar phosphotransferase system (PTS), including enzyme I, and histidine-containing protein (HPr) are required for the phosphorylation, which leads to the activation of the enzyme.

The enzyme catalyses glycerol + ATP = sn-glycerol 3-phosphate + ADP + H(+). It functions in the pathway polyol metabolism; glycerol degradation via glycerol kinase pathway; sn-glycerol 3-phosphate from glycerol: step 1/1. Activated by phosphorylation and inhibited by fructose 1,6-bisphosphate (FBP). Its function is as follows. Key enzyme in the regulation of glycerol uptake and metabolism. Catalyzes the phosphorylation of glycerol to yield sn-glycerol 3-phosphate. The chain is Glycerol kinase from Bacillus mycoides (strain KBAB4) (Bacillus weihenstephanensis).